Reading from the N-terminus, the 194-residue chain is ATP-dependent Clp protease proteolytic subunit (194 aa).

S98 serves as the catalytic Nucleophile. The active site involves H123.

It belongs to the peptidase S14 family. In terms of assembly, fourteen ClpP subunits assemble into 2 heptameric rings which stack back to back to give a disk-like structure with a central cavity, resembling the structure of eukaryotic proteasomes.

Its subcellular location is the cytoplasm. It carries out the reaction Hydrolysis of proteins to small peptides in the presence of ATP and magnesium. alpha-casein is the usual test substrate. In the absence of ATP, only oligopeptides shorter than five residues are hydrolyzed (such as succinyl-Leu-Tyr-|-NHMec, and Leu-Tyr-Leu-|-Tyr-Trp, in which cleavage of the -Tyr-|-Leu- and -Tyr-|-Trp bonds also occurs).. Cleaves peptides in various proteins in a process that requires ATP hydrolysis. Has a chymotrypsin-like activity. Plays a major role in the degradation of misfolded proteins. This chain is ATP-dependent Clp protease proteolytic subunit, found in Wigglesworthia glossinidia brevipalpis.